A 248-amino-acid chain; its full sequence is Triosephosphate isomerase (248 aa).

14 to 16 provides a ligand contact to substrate; that stretch reads NWK. His99 (electrophile) is an active-site residue. The active-site Proton acceptor is Glu170. Substrate-binding positions include Gly176, Ser212, and 233–234; that span reads GG.

The protein belongs to the triosephosphate isomerase family. Homodimer.

It localises to the cytoplasm. It carries out the reaction D-glyceraldehyde 3-phosphate = dihydroxyacetone phosphate. Its pathway is carbohydrate biosynthesis; gluconeogenesis. It participates in carbohydrate degradation; glycolysis; D-glyceraldehyde 3-phosphate from glycerone phosphate: step 1/1. Involved in the gluconeogenesis. Catalyzes stereospecifically the conversion of dihydroxyacetone phosphate (DHAP) to D-glyceraldehyde-3-phosphate (G3P). The protein is Triosephosphate isomerase of Bordetella bronchiseptica (strain ATCC BAA-588 / NCTC 13252 / RB50) (Alcaligenes bronchisepticus).